Reading from the N-terminus, the 251-residue chain is tRNA1(Val) (adenine(37)-N6)-methyltransferase (251 aa).

The protein belongs to the methyltransferase superfamily. tRNA (adenine-N(6)-)-methyltransferase family.

The protein localises to the cytoplasm. The enzyme catalyses adenosine(37) in tRNA1(Val) + S-adenosyl-L-methionine = N(6)-methyladenosine(37) in tRNA1(Val) + S-adenosyl-L-homocysteine + H(+). In terms of biological role, specifically methylates the adenine in position 37 of tRNA(1)(Val) (anticodon cmo5UAC). The chain is tRNA1(Val) (adenine(37)-N6)-methyltransferase from Shewanella frigidimarina (strain NCIMB 400).